A 367-amino-acid polypeptide reads, in one-letter code: Ferrochelatase (367 aa).

Fe cation contacts are provided by H226 and E307.

Belongs to the ferrochelatase family.

The protein resides in the cytoplasm. It catalyses the reaction heme b + 2 H(+) = protoporphyrin IX + Fe(2+). It participates in porphyrin-containing compound metabolism; protoheme biosynthesis; protoheme from protoporphyrin-IX: step 1/1. In terms of biological role, catalyzes the ferrous insertion into protoporphyrin IX. In Burkholderia mallei (strain NCTC 10247), this protein is Ferrochelatase.